The chain runs to 195 residues: 3-isopropylmalate dehydratase small subunit (195 aa).

This sequence belongs to the LeuD family. LeuD type 1 subfamily. Heterodimer of LeuC and LeuD.

The enzyme catalyses (2R,3S)-3-isopropylmalate = (2S)-2-isopropylmalate. Its pathway is amino-acid biosynthesis; L-leucine biosynthesis; L-leucine from 3-methyl-2-oxobutanoate: step 2/4. Its function is as follows. Catalyzes the isomerization between 2-isopropylmalate and 3-isopropylmalate, via the formation of 2-isopropylmaleate. This chain is 3-isopropylmalate dehydratase small subunit, found in Thermobifida fusca (strain YX).